The sequence spans 320 residues: Cytochrome f (320 aa).

Residues 1-35 (MQNRNTFSWVKEQMTRFISVSIMIYVITRTSISNA) form the signal peptide. Residues Tyr-36, Cys-56, Cys-59, and His-60 each coordinate heme. The helical transmembrane segment at 286 to 306 (VQGLLFFLASVILAQIFLVLK) threads the bilayer.

This sequence belongs to the cytochrome f family. The 4 large subunits of the cytochrome b6-f complex are cytochrome b6, subunit IV (17 kDa polypeptide, petD), cytochrome f and the Rieske protein, while the 4 small subunits are PetG, PetL, PetM and PetN. The complex functions as a dimer. The cofactor is heme.

It is found in the plastid. The protein resides in the chloroplast thylakoid membrane. In terms of biological role, component of the cytochrome b6-f complex, which mediates electron transfer between photosystem II (PSII) and photosystem I (PSI), cyclic electron flow around PSI, and state transitions. In Drimys granadensis, this protein is Cytochrome f.